The primary structure comprises 78 residues: Acyl carrier protein (78 aa).

The Carrier domain occupies 2 to 77 (SSIEERVKKI…QATSYVEANL (76 aa)). Serine 37 carries the O-(pantetheine 4'-phosphoryl)serine modification.

This sequence belongs to the acyl carrier protein (ACP) family. 4'-phosphopantetheine is transferred from CoA to a specific serine of apo-ACP by AcpS. This modification is essential for activity because fatty acids are bound in thioester linkage to the sulfhydryl of the prosthetic group.

Its subcellular location is the cytoplasm. It participates in lipid metabolism; fatty acid biosynthesis. In terms of biological role, carrier of the growing fatty acid chain in fatty acid biosynthesis. This chain is Acyl carrier protein, found in Hydrogenovibrio crunogenus (strain DSM 25203 / XCL-2) (Thiomicrospira crunogena).